Here is a 126-residue protein sequence, read N- to C-terminus: Anti-adapter protein IraD (126 aa).

Belongs to the GpW/Gp25 family. IraD subfamily. As to quaternary structure, interacts with RssB.

The protein localises to the cytoplasm. Its function is as follows. Inhibits RpoS proteolysis by regulating RssB activity, thereby increasing the stability of the sigma stress factor RpoS during oxidative stress. Its effect on RpoS stability is due to its interaction with RssB, which probably blocks the interaction of RssB with RpoS, and the consequent delivery of the RssB-RpoS complex to the ClpXP protein degradation pathway. This is Anti-adapter protein IraD from Salmonella choleraesuis (strain SC-B67).